A 420-amino-acid polypeptide reads, in one-letter code: UDP-N-acetyl-D-mannosamine dehydrogenase (420 aa).

NAD(+) is bound by residues Tyr13, Ile14, Asp33, Thr85, and Thr126. 8 residues coordinate UDP-N-acetyl-alpha-D-mannosaminouronate: Arg160, Val161, Lys212, Asn216, Arg219, His250, Arg252, and Gly263. Lys212 serves as the catalytic Proton donor/acceptor. Cys266 serves as the catalytic Nucleophile. Positions 330 and 331 each coordinate UDP-N-acetyl-alpha-D-mannosaminouronate. Arg338 lines the NAD(+) pocket. Position 416 (Lys416) interacts with UDP-N-acetyl-alpha-D-mannosaminouronate.

It belongs to the UDP-glucose/GDP-mannose dehydrogenase family. WecC subfamily. In terms of assembly, homodimer.

The enzyme catalyses UDP-N-acetyl-alpha-D-mannosamine + 2 NAD(+) + H2O = UDP-N-acetyl-alpha-D-mannosaminouronate + 2 NADH + 3 H(+). It participates in bacterial outer membrane biogenesis; enterobacterial common antigen biosynthesis. Its function is as follows. Catalyzes the four-electron oxidation of UDP-N-acetyl-D-mannosamine (UDP-ManNAc), reducing NAD(+) and releasing UDP-N-acetylmannosaminuronic acid (UDP-ManNAcA). This is UDP-N-acetyl-D-mannosamine dehydrogenase from Salmonella typhi.